The primary structure comprises 238 residues: Ribosomal RNA large subunit methyltransferase E (238 aa).

5 residues coordinate S-adenosyl-L-methionine: Gly-76, Trp-78, Asp-99, Asp-115, and Asp-139. The active-site Proton acceptor is Lys-179.

The protein belongs to the class I-like SAM-binding methyltransferase superfamily. RNA methyltransferase RlmE family.

The protein resides in the cytoplasm. The enzyme catalyses uridine(2552) in 23S rRNA + S-adenosyl-L-methionine = 2'-O-methyluridine(2552) in 23S rRNA + S-adenosyl-L-homocysteine + H(+). Specifically methylates the uridine in position 2552 of 23S rRNA at the 2'-O position of the ribose in the fully assembled 50S ribosomal subunit. In Rhodopseudomonas palustris (strain BisB18), this protein is Ribosomal RNA large subunit methyltransferase E.